Consider the following 734-residue polypeptide: DNA replication licensing factor MCM5 (734 aa).

Residue Ser-2 is modified to N-acetylserine. The 207-residue stretch at 331-537 folds into the MCM domain; it reads IYELISKSIA…RDVMLAKHVI (207 aa). ADP is bound at residue Arg-371. N6-acetyllysine is present on residues Lys-392 and Lys-396. An Arginine finger motif is present at residues 512–515; that stretch reads SRFD. A Phosphoserine modification is found at Ser-605.

This sequence belongs to the MCM family. In terms of assembly, component of the MCM2-7 complex. The complex forms a toroidal hexameric ring with the proposed subunit order MCM2-MCM6-MCM4-MCM7-MCM3-MCM5. Component of the CMG helicase complex, a hexameric ring of related MCM2-7 subunits stabilized by CDC45 and the tetrameric GINS complex. Interacts with ANKRD17. Interacts with MCMBP. Interacts with TONSL; the interaction is direct.

The protein localises to the nucleus. It is found in the chromosome. It localises to the cytoplasm. The protein resides in the cytosol. It catalyses the reaction ATP + H2O = ADP + phosphate + H(+). In terms of biological role, acts as a component of the MCM2-7 complex (MCM complex) which is the replicative helicase essential for 'once per cell cycle' DNA replication initiation and elongation in eukaryotic cells. Core component of CDC45-MCM-GINS (CMG) helicase, the molecular machine that unwinds template DNA during replication, and around which the replisome is built. The active ATPase sites in the MCM2-7 ring are formed through the interaction surfaces of two neighboring subunits such that a critical structure of a conserved arginine finger motif is provided in trans relative to the ATP-binding site of the Walker A box of the adjacent subunit. The six ATPase active sites, however, are likely to contribute differentially to the complex helicase activity. This is DNA replication licensing factor MCM5 from Bos taurus (Bovine).